We begin with the raw amino-acid sequence, 55 residues long: Large ribosomal subunit protein bL33 (55 aa).

Belongs to the bacterial ribosomal protein bL33 family.

The polypeptide is Large ribosomal subunit protein bL33 (Rhodopseudomonas palustris (strain BisA53)).